Reading from the N-terminus, the 185-residue chain is Adenine phosphoribosyltransferase (185 aa).

Belongs to the purine/pyrimidine phosphoribosyltransferase family. As to quaternary structure, homodimer.

Its subcellular location is the cytoplasm. It carries out the reaction AMP + diphosphate = 5-phospho-alpha-D-ribose 1-diphosphate + adenine. It participates in purine metabolism; AMP biosynthesis via salvage pathway; AMP from adenine: step 1/1. Catalyzes a salvage reaction resulting in the formation of AMP, that is energically less costly than de novo synthesis. This chain is Adenine phosphoribosyltransferase, found in Arthrobacter sp. (strain FB24).